A 491-amino-acid polypeptide reads, in one-letter code: Cytochrome P450 2F5 (491 aa).

Cys-436 lines the heme pocket.

Belongs to the cytochrome P450 family. Heme serves as cofactor.

Its subcellular location is the endoplasmic reticulum membrane. The protein resides in the microsome membrane. The enzyme catalyses an organic molecule + reduced [NADPH--hemoprotein reductase] + O2 = an alcohol + oxidized [NADPH--hemoprotein reductase] + H2O + H(+). Cytochromes P450 are a group of heme-thiolate monooxygenases. In liver microsomes, this enzyme is involved in an NADPH-dependent electron transport pathway. It oxidizes a variety of structurally unrelated compounds, including steroids, fatty acids, and xenobiotics. The protein is Cytochrome P450 2F5 (CYP2F5) of Gorilla gorilla gorilla (Western lowland gorilla).